The primary structure comprises 101 residues: Ribonuclease kappa-B (101 aa).

Transmembrane regions (helical) follow at residues 13-33 (ACGI…GIFF) and 68-88 (VGIN…VSLC).

This sequence belongs to the RNase K family.

It is found in the membrane. Endoribonuclease which preferentially cleaves ApU and ApG phosphodiester bonds. The protein is Ribonuclease kappa-B (rnasekb) of Danio rerio (Zebrafish).